Consider the following 105-residue polypeptide: N(4)-acetylcytidine amidohydrolase (105 aa).

One can recognise an ASCH domain in the interval 7-93; sequence TFFERFEHDI…VIAEIYPGLE (87 aa). Catalysis depends on Lys21, which acts as the Proton acceptor. Residue Thr24 is the Nucleophile of the active site. Glu74 functions as the Proton donor in the catalytic mechanism.

The protein belongs to the N(4)-acetylcytidine amidohydrolase family.

The catalysed reaction is N(4)-acetylcytidine + H2O = cytidine + acetate + H(+). The enzyme catalyses N(4)-acetyl-2'-deoxycytidine + H2O = 2'-deoxycytidine + acetate + H(+). It carries out the reaction N(4)-acetylcytosine + H2O = cytosine + acetate + H(+). In terms of biological role, catalyzes the hydrolysis of N(4)-acetylcytidine (ac4C). The sequence is that of N(4)-acetylcytidine amidohydrolase from Shewanella baltica (strain OS155 / ATCC BAA-1091).